The sequence spans 111 residues: Cytochrome c oxidase subunit 6A1, mitochondrial (111 aa).

The N-terminal 26 residues, 1–26 (MASAVLSASRVSRPLGRALPGLRRPM), are a transit peptide targeting the mitochondrion. At 27-36 (SSGAHGEEGS) the chain is on the mitochondrial matrix side. The chain crosses the membrane as a helical span at residues 37-61 (ARMWKALTYFVALPGVGVSMLNVFL). Topologically, residues 62–111 (KSRHEEHERPPFVAYPHLRIRTKPFPWGDGNHTLFHNPHVNPLPTGYEDE) are mitochondrial intermembrane.

Belongs to the cytochrome c oxidase subunit 6A family. Component of the cytochrome c oxidase (complex IV, CIV), a multisubunit enzyme composed of 14 subunits. The complex is composed of a catalytic core of 3 subunits MT-CO1, MT-CO2 and MT-CO3, encoded in the mitochondrial DNA, and 11 supernumerary subunits COX4I, COX5A, COX5B, COX6A, COX6B, COX6C, COX7A, COX7B, COX7C, COX8 and NDUFA4, which are encoded in the nuclear genome. The complex exists as a monomer or a dimer and forms supercomplexes (SCs) in the inner mitochondrial membrane with NADH-ubiquinone oxidoreductase (complex I, CI) and ubiquinol-cytochrome c oxidoreductase (cytochrome b-c1 complex, complex III, CIII), resulting in different assemblies (supercomplex SCI(1)III(2)IV(1) and megacomplex MCI(2)III(2)IV(2)).

The protein resides in the mitochondrion inner membrane. The protein operates within energy metabolism; oxidative phosphorylation. Its function is as follows. Component of the cytochrome c oxidase, the last enzyme in the mitochondrial electron transport chain which drives oxidative phosphorylation. The respiratory chain contains 3 multisubunit complexes succinate dehydrogenase (complex II, CII), ubiquinol-cytochrome c oxidoreductase (cytochrome b-c1 complex, complex III, CIII) and cytochrome c oxidase (complex IV, CIV), that cooperate to transfer electrons derived from NADH and succinate to molecular oxygen, creating an electrochemical gradient over the inner membrane that drives transmembrane transport and the ATP synthase. Cytochrome c oxidase is the component of the respiratory chain that catalyzes the reduction of oxygen to water. Electrons originating from reduced cytochrome c in the intermembrane space (IMS) are transferred via the dinuclear copper A center (CU(A)) of subunit 2 and heme A of subunit 1 to the active site in subunit 1, a binuclear center (BNC) formed by heme A3 and copper B (CU(B)). The BNC reduces molecular oxygen to 2 water molecules unsing 4 electrons from cytochrome c in the IMS and 4 protons from the mitochondrial matrix. This chain is Cytochrome c oxidase subunit 6A1, mitochondrial (Cox6a1), found in Mus musculus (Mouse).